The following is a 257-amino-acid chain: MKIGIVGCLGRMGRIIVQEVVGTGGVELSGGVVRRGNGLVGEDMGAVLGCGHGAKITDSKEFLFDCSDVVIDFSSPECMLECVGIASEKRVPLVSGTTGVDERDFRTHAEKVPLLWSCNMSLGVTLLLELVKMAAAGFRGYDVEIRELHHRAKKDAPSGTSLMLGKAVAQGMGVELESQQHTFGSGCRRSGAVGFSVARGGGVIGDHAVMFLGDDEIVELQHRAIDRRVFARGAIKAACWLVGKPAGLYTMSDVLRA.

Residue 7-12 (GCLGRM) coordinates NAD(+). An NADP(+)-binding site is contributed by Arg34. NAD(+)-binding positions include 96–98 (GTT) and 117–120 (SCNM). The active-site Proton donor/acceptor is the His149. His150 lines the (S)-2,3,4,5-tetrahydrodipicolinate pocket. Residue Lys153 is the Proton donor of the active site. 159–160 (GT) is a (S)-2,3,4,5-tetrahydrodipicolinate binding site.

This sequence belongs to the DapB family.

The protein resides in the cytoplasm. The catalysed reaction is (S)-2,3,4,5-tetrahydrodipicolinate + NAD(+) + H2O = (2S,4S)-4-hydroxy-2,3,4,5-tetrahydrodipicolinate + NADH + H(+). The enzyme catalyses (S)-2,3,4,5-tetrahydrodipicolinate + NADP(+) + H2O = (2S,4S)-4-hydroxy-2,3,4,5-tetrahydrodipicolinate + NADPH + H(+). It functions in the pathway amino-acid biosynthesis; L-lysine biosynthesis via DAP pathway; (S)-tetrahydrodipicolinate from L-aspartate: step 4/4. Catalyzes the conversion of 4-hydroxy-tetrahydrodipicolinate (HTPA) to tetrahydrodipicolinate. In Anaplasma marginale (strain St. Maries), this protein is 4-hydroxy-tetrahydrodipicolinate reductase.